The primary structure comprises 92 residues: UPF0223 protein SMU_1141c (92 aa).

It belongs to the UPF0223 family.

The sequence is that of UPF0223 protein SMU_1141c from Streptococcus mutans serotype c (strain ATCC 700610 / UA159).